Here is a 327-residue protein sequence, read N- to C-terminus: tRNA(Ile)-lysidine synthase (327 aa).

Residue Ser32 to Ser37 participates in ATP binding.

The protein belongs to the tRNA(Ile)-lysidine synthase family.

It localises to the cytoplasm. It catalyses the reaction cytidine(34) in tRNA(Ile2) + L-lysine + ATP = lysidine(34) in tRNA(Ile2) + AMP + diphosphate + H(+). Functionally, ligates lysine onto the cytidine present at position 34 of the AUA codon-specific tRNA(Ile) that contains the anticodon CAU, in an ATP-dependent manner. Cytidine is converted to lysidine, thus changing the amino acid specificity of the tRNA from methionine to isoleucine. The protein is tRNA(Ile)-lysidine synthase of Synechococcus sp. (strain JA-2-3B'a(2-13)) (Cyanobacteria bacterium Yellowstone B-Prime).